A 1046-amino-acid chain; its full sequence is uncharacterized protein (1046 aa).

Residues 594–615 (LNSIPSDSSSSGSSRKSSPRGS) show a composition bias toward low complexity. A disordered region spans residues 594 to 622 (LNSIPSDSSSSGSSRKSSPRGSPNLGEAP).

This is an uncharacterized protein from Invertebrate iridescent virus 6 (IIV-6).